The chain runs to 119 residues: Large ribosomal subunit protein uL18 (119 aa).

The segment at 1–23 (MSQVDKAARRQKIKDRSRVSVQG) is disordered.

This sequence belongs to the universal ribosomal protein uL18 family. Part of the 50S ribosomal subunit; part of the 5S rRNA/L5/L18/L25 subcomplex. Contacts the 5S and 23S rRNAs.

This is one of the proteins that bind and probably mediate the attachment of the 5S RNA into the large ribosomal subunit, where it forms part of the central protuberance. The polypeptide is Large ribosomal subunit protein uL18 (Chlorobium chlorochromatii (strain CaD3)).